The following is a 393-amino-acid chain: S-adenosylmethionine synthase 2 (393 aa).

Mg(2+) is bound at residue glutamate 9. Histidine 15 contacts ATP. K(+) is bound at residue glutamate 43. L-methionine contacts are provided by glutamate 56 and glutamine 99. Residues 167–169 (DGK), 235–238 (SGRF), aspartate 246, 252–253 (RK), alanine 269, lysine 273, and lysine 277 contribute to the ATP site. Position 246 (aspartate 246) interacts with L-methionine. Lysine 277 is a binding site for L-methionine.

Belongs to the AdoMet synthase family. As to quaternary structure, homotetramer. Mn(2+) serves as cofactor. It depends on Mg(2+) as a cofactor. Requires Co(2+) as cofactor. K(+) is required as a cofactor. The cofactor is NH4(+). As to expression, mostly expressed in roots, and, to a lower extent, in hypocotyls and cotyledons.

The protein resides in the cytoplasm. It catalyses the reaction L-methionine + ATP + H2O = S-adenosyl-L-methionine + phosphate + diphosphate. Its pathway is amino-acid biosynthesis; S-adenosyl-L-methionine biosynthesis; S-adenosyl-L-methionine from L-methionine: step 1/1. Inhibited by products of SAMS reaction (SAM, Pi, PPi), substrate analogs (cycloleucine and ethionine), and alternative nucleotides (GTP, CTP and ADP). Strongly repressed by PPPi. Catalyzes the formation of S-adenosylmethionine from methionine and ATP. The reaction comprises two steps that are both catalyzed by the same enzyme: formation of S-adenosylmethionine (AdoMet) and triphosphate, and subsequent hydrolysis of the triphosphate. This Catharanthus roseus (Madagascar periwinkle) protein is S-adenosylmethionine synthase 2 (SAMS2).